Reading from the N-terminus, the 419-residue chain is Methyltransferase/ribosomally synthesized type I borosin cyclic peptide precursor gjuMa (419 aa).

Residues 1–255 form a methyltransferase domain region; the sequence is MATPIATTTN…AISTLYVPPR (255 aa). Residues Arg79, Tyr83, and Tyr105 contribute to the active site. Residues Tyr105, His107, Val110, Ala137, Gln179, Gly217, Ser248, and Thr249 each contribute to the S-adenosyl-L-methionine site. The interval 256–381 is clasp domain; that stretch reads DISPVDPTMA…GAVYALMSRP (126 aa). A precursor leader region spans residues 382-404; the sequence is TGDIAREKELTNDEIANNHGAPY. Ser408 is subject to N-methylserine. Residue Ala409 is modified to N-methylalanine. Position 410 is an N-methylvaline (Val410). Residues Ile411 and Ile412 each carry the N-methylisoleucine modification. N-methylalanine is present on residues Ala413 and Ala414. 2 positions are modified to N-methylisoleucine: Ile415 and Ile416.

In the N-terminal section; belongs to the precorrin methyltransferase family. As to quaternary structure, homodimer. In terms of processing, gjuMA automethylates at Ser-408, Ala-409, Val-410, Ile-411, Ile-412, Ala-413, Ala-414, Ile-415 and Ile-416 before being processed by ae prolyloligopeptidase which likely forms a peptidyl ester upon removal of the follower propeptide, which then undergoes macrocyclization with the N-terminus of the modified core peptide. Peptide backbone alpha-N-methylations change the physicochemical properties of amide bonds to provide structural constraints and other favorable characteristics including biological membrane permeability to peptides.

It participates in secondary metabolite biosynthesis. Fusion protein of the methyltransferase gjuM and the type I borosin core peptide; part of the gene cluster that mediates the biosynthesis of a type I borosin, a highly methylated cyclic peptide with potent biological activities. Type I borosins derive from the C-terminus of the fusion protein, and it is the same protein that methylates its own C-terminus using S-adenosyl methionine (SAM). The C-terminus is subsequently cleaved off and macrocyclized by a prolyloligopeptidase to give the final product. The protein is Methyltransferase/ribosomally synthesized type I borosin cyclic peptide precursor gjuMa of Gymnopilus junonius (Spectacular rustgill mushroom).